A 292-amino-acid polypeptide reads, in one-letter code: Elongation factor Ts (292 aa).

An involved in Mg(2+) ion dislocation from EF-Tu region spans residues 80–83 (TDFV).

This sequence belongs to the EF-Ts family.

It is found in the cytoplasm. In terms of biological role, associates with the EF-Tu.GDP complex and induces the exchange of GDP to GTP. It remains bound to the aminoacyl-tRNA.EF-Tu.GTP complex up to the GTP hydrolysis stage on the ribosome. This chain is Elongation factor Ts, found in Ralstonia pickettii (strain 12J).